We begin with the raw amino-acid sequence, 318 residues long: MIKKRNTTKISVIGAGSVGATTAYALMLSGVATEIVLVDVNKSKTEGEAMDLSHGADFVKPVNILSGDYKDTEGSDIVVITAGAAQKVGETRLQLINKNINIFKSIIPQVVKYNKDAILLVVSNPVDVLSYVTYKLSGFPKERVIGSGTVLDTSRLKHEIGKRYKIDPRNVNTYIMGEHGDSEIATWSVTNIQNIKIDEYANKENLEYNDNFRKEVYENVKNAAYEVINRKGATFYAIALAVTRIVKAILGDEKTILPVSTLVENYYGIKDVYLGMPCIVGGSGIEKALSIDLNKTEASKLVKSAETLKNTLNNASCL.

NAD(+)-binding positions include Val18, Asp39, Lys44, Tyr69, and 83 to 84; that span reads GA. Substrate is bound by residues Gln86 and Arg92. Residues Ser105, 122–124, and Ser147 contribute to the NAD(+) site; that span reads VSN. 124-127 lines the substrate pocket; sequence NPVD. Substrate is bound at residue 152-155; it reads DTSR. His179 acts as the Proton acceptor in catalysis. Residue Tyr225 is modified to Phosphotyrosine. Thr234 lines the substrate pocket.

It belongs to the LDH/MDH superfamily. LDH family. As to quaternary structure, homotetramer.

The protein localises to the cytoplasm. The enzyme catalyses (S)-lactate + NAD(+) = pyruvate + NADH + H(+). It participates in fermentation; pyruvate fermentation to lactate; (S)-lactate from pyruvate: step 1/1. Catalyzes the conversion of lactate to pyruvate. This chain is L-lactate dehydrogenase, found in Clostridium botulinum (strain ATCC 19397 / Type A).